A 194-amino-acid polypeptide reads, in one-letter code: Large ribosomal subunit protein uL6x (194 aa).

Residue Thr75 is modified to Phosphothreonine.

This sequence belongs to the universal ribosomal protein uL6 family.

The protein is Large ribosomal subunit protein uL6x (RPL9D) of Arabidopsis thaliana (Mouse-ear cress).